A 966-amino-acid polypeptide reads, in one-letter code: Protein STICHEL-like 4 (966 aa).

Disordered stretches follow at residues 64 to 118 and 200 to 237; these read RSLR…DRSS and RDNA…REQN. A compositionally biased stretch (basic and acidic residues) spans 75-84; sequence LKEDHQDSRE. Positions 98–108 are enriched in polar residues; it reads PIVSFGTSKVT. Over residues 109 to 118 the composition is skewed to basic and acidic residues; that stretch reads PSDEKFDRSS. Residues 208-217 are compositionally biased toward polar residues; that stretch reads SEMSIASNSV. Basic and acidic residues predominate over residues 219–236; the sequence is RGEKYEGEEGGGGRDREQ. Residue 384 to 391 coordinates ATP; that stretch reads GPNGTGKT. Zn(2+)-binding residues include cysteine 403, cysteine 412, cysteine 415, and cysteine 418. A coiled-coil region spans residues 650–678; sequence SKEDMEKLKQALKTLSESEKQLRVSNDKL. Polar residues predominate over residues 706–717; the sequence is FNHTPLTDSDPS. Residues 706 to 733 form a disordered region; that stretch reads FNHTPLTDSDPSNHVVAGTRRDDSKQGF.

The protein belongs to the DnaX/STICHEL family.

The polypeptide is Protein STICHEL-like 4 (Arabidopsis thaliana (Mouse-ear cress)).